Consider the following 365-residue polypeptide: MFNRKLMECSDDEFVRGSQCDEEDEEEQQRQSSQRPPFYENMRTFAPSHMHISCHYDIPYPPHLIQPPVCGVSTFTYAREFPVSNSQQFFNVTPPQQQQQQGTGGSGEEDYCIPKSEDRDHSSNYSQVATKQDRPFVFFASDCQSPLEIVGEVYCTVPGRTSLLSSTTKYRVTVAEIQRRISPPECLNASLLGGILRKAKSKDGGKTLRDSLKKLGLTLPAGRRKQANVTAWTALVEEEAIHMAKEFALVCEKEFHSREIGIYLTKTSLAIDPDVVKRRTALEMSRKVVGELAELLSCDRTPLTPYFPRNMLPIDPSVQQHLSHFTLMTHGFGNVAMSAVLESVKLMIDESIKYIDRCCSQNVWR.

2 disordered regions span residues 13-40 (EFVR…PFYE) and 93-126 (TPPQ…SNYS). An H-S-H (helix-span-helix), dimerization region spans residues 223-356 (RRKQANVTAW…MIDESIKYID (134 aa)).

The protein belongs to the AP-2 family. As to quaternary structure, binds DNA as a dimer. In terms of tissue distribution, expressed in five interneurons AIB, RIB and RIS.

The protein localises to the nucleus. In terms of biological role, transcription factor, which is required in the single sleep-active ring interneuron RIS for sleep-like behavioral quiescence induced by neuropeptide signaling in larvae. Regulates gene expression of sleep-inducing FMRFamide-like neuropeptide flp-11 in RIS. The sequence is that of Transcription factor aptf-1 from Caenorhabditis elegans.